A 154-amino-acid polypeptide reads, in one-letter code: Transcriptional repressor NrdR (154 aa).

A zinc finger spans residues 3–34 (CPFCRHPDSRVIDSRETDEGQAIRRRRSCPEC). The ATP-cone domain occupies 46 to 136 (LAVVKRSGVT…VYRSFESADD (91 aa)).

This sequence belongs to the NrdR family. Zn(2+) is required as a cofactor.

Its function is as follows. Negatively regulates transcription of bacterial ribonucleotide reductase nrd genes and operons by binding to NrdR-boxes. The chain is Transcriptional repressor NrdR from Mycobacterium avium (strain 104).